The following is a 1146-amino-acid chain: Inositol hexakisphosphate and diphosphoinositol-pentakisphosphate kinase (1146 aa).

The interval 1–33 is disordered; that stretch reads MSGIKKEPIESDEVPQQETKNNLPSAPSEMSPL. Residues 16 to 25 are compositionally biased toward polar residues; it reads QQETKNNLPS. Residues S31, S54, and S77 each carry the phosphoserine modification. A disordered region spans residues 93–185; the sequence is TALGNGNNTN…STSHPKPRLP (93 aa). The segment covering 96–106 has biased composition (low complexity); that stretch reads GNGNNTNTVTT. Basic and acidic residues predominate over residues 110 to 120; it reads KKADSESKSEA. A compositionally biased stretch (polar residues) spans 125-144; sequence LSNSNIVNDADNINSISKTG. Low complexity predominate over residues 164–178; the sequence is SVPTSSASSRKSSTS. Position 197 to 198 (197 to 198) interacts with substrate; it reads AK. ATP is bound by residues R278, K351, H358, R377, 402–405, and 412–414; these read EQFM and DVK. 377–378 provides a ligand contact to substrate; the sequence is RK. Substrate contacts are provided by K414 and R428. ATP contacts are provided by residues S430, D475, and 487–489; that span reads DVN. 492–495 is a substrate binding site; sequence SFVK. Positions 530–597 are polyphosphoinositide-binding domain; the sequence is REEKEQKWVF…VLQALRIALD (68 aa). Residues S895 and S1107 each carry the phosphoserine modification. The tract at residues 1106-1146 is disordered; sequence TSPNLSFQKRKTRRKSVSVEKLKRPASSGSSSSTSVNKTLD.

Belongs to the histidine acid phosphatase family. VIP1 subfamily.

The protein localises to the cytoplasm. The protein resides in the cytoskeleton. It carries out the reaction 1D-myo-inositol hexakisphosphate + ATP = 1-diphospho-1D-myo-inositol 2,3,4,5,6-pentakisphosphate + ADP. It catalyses the reaction 5-diphospho-1D-myo-inositol 1,2,3,4,6-pentakisphosphate + ATP + H(+) = 1,5-bis(diphospho)-1D-myo-inositol 2,3,4,6-tetrakisphosphate + ADP. In terms of biological role, bifunctional inositol kinase that acts in concert with the IP6K kinases to synthesize the diphosphate group-containing inositol pyrophosphates diphosphoinositol pentakisphosphate, PP-InsP5, and bis-diphosphoinositol tetrakisphosphate, (PP)2-InsP4. Phosphorylates inositol hexakisphosphate (InsP6) at position 1 to produce PP-InsP5 which is in turn phosphorylated by IP6Ks to produce (PP)2-InsP4. Alternatively, phosphorylates PP-InsP5 at position 1, produced by IP6Ks from InsP6, to produce (PP)2-InsP4. Required for maintaining cellular integrity, normal growth and interactions with the ARP complex. Acts as a regulator of the PHO80-PHO85 cyclin/cyclin-dependent kinase (CDK) complex, thereby regulating signaling of phosphate availability. Required for the function of the cortical actin cytoskeleton, possibly by participating in correct F-actin localization and ensuring polarized growth. Regulates polarized growth and modulates interphase microtubule cytoskeleton. Regulates microtubule dynamics without the requirement of microtubule plus-end tracking protein Mal3. Required for growth zone selection. The polypeptide is Inositol hexakisphosphate and diphosphoinositol-pentakisphosphate kinase (Saccharomyces cerevisiae (strain ATCC 204508 / S288c) (Baker's yeast)).